The sequence spans 904 residues: Alanine--tRNA ligase (904 aa).

4 residues coordinate Zn(2+): H594, H598, C695, and H699.

It belongs to the class-II aminoacyl-tRNA synthetase family. Zn(2+) serves as cofactor.

It localises to the cytoplasm. It carries out the reaction tRNA(Ala) + L-alanine + ATP = L-alanyl-tRNA(Ala) + AMP + diphosphate. Functionally, catalyzes the attachment of alanine to tRNA(Ala) in a two-step reaction: alanine is first activated by ATP to form Ala-AMP and then transferred to the acceptor end of tRNA(Ala). Also edits incorrectly charged Ser-tRNA(Ala) and Gly-tRNA(Ala) via its editing domain. This Anaeromyxobacter sp. (strain Fw109-5) protein is Alanine--tRNA ligase.